The primary structure comprises 637 residues: tRNA 5-methylaminomethyl-2-thiouridine biosynthesis bifunctional protein MnmC (637 aa).

Residues 1–232 (MPERIEWLED…KRDNLQGEFN (232 aa)) are tRNA (mnm(5)s(2)U34)-methyltransferase. Positions 255–637 (IGAGLAGAAV…YGEAKLVSED (383 aa)) are FAD-dependent cmnm(5)s(2)U34 oxidoreductase.

It in the N-terminal section; belongs to the methyltransferase superfamily. tRNA (mnm(5)s(2)U34)-methyltransferase family. The protein in the C-terminal section; belongs to the DAO family. It depends on FAD as a cofactor.

The protein resides in the cytoplasm. The enzyme catalyses 5-aminomethyl-2-thiouridine(34) in tRNA + S-adenosyl-L-methionine = 5-methylaminomethyl-2-thiouridine(34) in tRNA + S-adenosyl-L-homocysteine + H(+). Its function is as follows. Catalyzes the last two steps in the biosynthesis of 5-methylaminomethyl-2-thiouridine (mnm(5)s(2)U) at the wobble position (U34) in tRNA. Catalyzes the FAD-dependent demodification of cmnm(5)s(2)U34 to nm(5)s(2)U34, followed by the transfer of a methyl group from S-adenosyl-L-methionine to nm(5)s(2)U34, to form mnm(5)s(2)U34. The chain is tRNA 5-methylaminomethyl-2-thiouridine biosynthesis bifunctional protein MnmC from Polaromonas sp. (strain JS666 / ATCC BAA-500).